Here is a 410-residue protein sequence, read N- to C-terminus: Serine hydroxymethyltransferase (410 aa).

(6S)-5,6,7,8-tetrahydrofolate is bound by residues Leu-116 and 120–122 (GHL). Position 225 is an N6-(pyridoxal phosphate)lysine (Lys-225). 349–351 (SPF) provides a ligand contact to (6S)-5,6,7,8-tetrahydrofolate.

This sequence belongs to the SHMT family. In terms of assembly, homodimer. Pyridoxal 5'-phosphate is required as a cofactor.

Its subcellular location is the cytoplasm. The catalysed reaction is (6R)-5,10-methylene-5,6,7,8-tetrahydrofolate + glycine + H2O = (6S)-5,6,7,8-tetrahydrofolate + L-serine. The protein operates within one-carbon metabolism; tetrahydrofolate interconversion. It functions in the pathway amino-acid biosynthesis; glycine biosynthesis; glycine from L-serine: step 1/1. In terms of biological role, catalyzes the reversible interconversion of serine and glycine with tetrahydrofolate (THF) serving as the one-carbon carrier. This reaction serves as the major source of one-carbon groups required for the biosynthesis of purines, thymidylate, methionine, and other important biomolecules. Also exhibits THF-independent aldolase activity toward beta-hydroxyamino acids, producing glycine and aldehydes, via a retro-aldol mechanism. This chain is Serine hydroxymethyltransferase, found in Leuconostoc citreum (strain KM20).